The primary structure comprises 314 residues: Homeobox protein DBX1-A (314 aa).

The homeobox DNA-binding region spans G175 to K234. Disordered stretches follow at residues K234–S279 and S292–S314. Positions D258–S267 are enriched in basic and acidic residues. Acidic residues predominate over residues S305 to S314.

It belongs to the H2.0 homeobox family.

The protein localises to the nucleus. The protein is Homeobox protein DBX1-A (dbx1a) of Danio rerio (Zebrafish).